We begin with the raw amino-acid sequence, 313 residues long: Dimethyladenosine transferase (313 aa).

The tract at residues 1-21 (MPKVKSGAIGRRRGRQEQRRE) is disordered. H37, L39, G64, E85, D113, and N128 together coordinate S-adenosyl-L-methionine.

This sequence belongs to the class I-like SAM-binding methyltransferase superfamily. rRNA adenine N(6)-methyltransferase family. As to quaternary structure, part of the small subunit (SSU) processome, composed of more than 70 proteins and the RNA chaperone small nucleolar RNA (snoRNA) U3.

It is found in the nucleus. It localises to the nucleoplasm. The protein resides in the nucleolus. The enzyme catalyses adenosine(1779)/adenosine(1780) in 18S rRNA + 4 S-adenosyl-L-methionine = N(6)-dimethyladenosine(1779)/N(6)-dimethyladenosine(1780) in 18S rRNA + 4 S-adenosyl-L-homocysteine + 4 H(+). Functionally, specifically dimethylates two adjacent adenosines in the loop of a conserved hairpin near the 3'-end of 18S rRNA in the 40S particle. Involved in the pre-rRNA processing steps leading to small-subunit rRNA production independently of its RNA-modifying catalytic activity. Part of the small subunit (SSU) processome, first precursor of the small eukaryotic ribosomal subunit. During the assembly of the SSU processome in the nucleolus, many ribosome biogenesis factors, an RNA chaperone and ribosomal proteins associate with the nascent pre-rRNA and work in concert to generate RNA folding, modifications, rearrangements and cleavage as well as targeted degradation of pre-ribosomal RNA by the RNA exosome. The protein is Dimethyladenosine transferase (DIMT1) of Macaca fascicularis (Crab-eating macaque).